We begin with the raw amino-acid sequence, 335 residues long: DNA primase small subunit PriS (335 aa).

Active-site residues include Asp96, Asp98, and Asp243.

This sequence belongs to the eukaryotic-type primase small subunit family. In terms of assembly, heterodimer of a small subunit (PriS) and a large subunit (PriL). Mg(2+) serves as cofactor. The cofactor is Mn(2+).

In terms of biological role, catalytic subunit of DNA primase, an RNA polymerase that catalyzes the synthesis of short RNA molecules used as primers for DNA polymerase during DNA replication. The small subunit contains the primase catalytic core and has DNA synthesis activity on its own. Binding to the large subunit stabilizes and modulates the activity, increasing the rate of DNA synthesis while decreasing the length of the DNA fragments, and conferring RNA synthesis capability. The DNA polymerase activity may enable DNA primase to also catalyze primer extension after primer synthesis. May also play a role in DNA repair. In Archaeoglobus fulgidus (strain ATCC 49558 / DSM 4304 / JCM 9628 / NBRC 100126 / VC-16), this protein is DNA primase small subunit PriS.